A 211-amino-acid chain; its full sequence is Redox-sensing transcriptional repressor Rex (211 aa).

The segment at residues 17–56 (LYYRLVSILKGKGIDRVNSKTISEALQIDSATIRRDFSYF) is a DNA-binding region (H-T-H motif). 91–96 (GIGNLG) lines the NAD(+) pocket.

The protein belongs to the transcriptional regulatory Rex family. In terms of assembly, homodimer.

It is found in the cytoplasm. Functionally, modulates transcription in response to changes in cellular NADH/NAD(+) redox state. This chain is Redox-sensing transcriptional repressor Rex, found in Staphylococcus epidermidis (strain ATCC 12228 / FDA PCI 1200).